The following is a 347-amino-acid chain: DNA-directed RNA polymerase subunit alpha (347 aa).

The interval 1 to 243 (MLFREGTRLI…DQISVFINFD (243 aa)) is alpha N-terminal domain (alpha-NTD). Positions 255–347 (SGSSDLNDNL…EWKRKQHHEA (93 aa)) are alpha C-terminal domain (alpha-CTD).

This sequence belongs to the RNA polymerase alpha chain family. As to quaternary structure, homodimer. The RNAP catalytic core consists of 2 alpha, 1 beta, 1 beta' and 1 omega subunit. When a sigma factor is associated with the core the holoenzyme is formed, which can initiate transcription.

It catalyses the reaction RNA(n) + a ribonucleoside 5'-triphosphate = RNA(n+1) + diphosphate. DNA-dependent RNA polymerase catalyzes the transcription of DNA into RNA using the four ribonucleoside triphosphates as substrates. In Lawsonia intracellularis (strain PHE/MN1-00), this protein is DNA-directed RNA polymerase subunit alpha.